The chain runs to 90 residues: U7-theraphotoxin-Hhn1k (90 aa).

The first 19 residues, 1-19 (MKTAIFTVVLALAVFAVLS), serve as a signal peptide directing secretion. The propeptide occupies 20-50 (FGWEANEKALSEEFTELIHEKEAASETEARE). Intrachain disulfides connect Cys51/Cys65 and Cys58/Cys70.

This sequence belongs to the neurotoxin 10 (Hwtx-1) family. 13 (Hntx-13) subfamily. In terms of tissue distribution, expressed by the venom gland.

Its subcellular location is the secreted. Its function is as follows. Ion channel inhibitor. This Cyriopagopus hainanus (Chinese bird spider) protein is U7-theraphotoxin-Hhn1k.